We begin with the raw amino-acid sequence, 239 residues long: Cysteine-rich venom protein (239 aa).

The first 19 residues, 1-19 (MIAFLVLPILAAVLQQSSG), serve as a signal peptide directing secretion. Residues 39 to 166 (DLHNSLRRSV…EYKYFYVCQY (128 aa)) form the SCP domain. 8 cysteine pairs are disulfide-bonded: Cys-75/Cys-153, Cys-92/Cys-167, Cys-148/Cys-164, Cys-186/Cys-193, Cys-189/Cys-198, Cys-202/Cys-234, Cys-211/Cys-228, and Cys-219/Cys-232. The ShKT domain occupies 202–234 (CTHEDKFTNCKDLVKQGCNNNYLKTNCPASCSC).

It belongs to the CRISP family. Expressed by the venom gland.

The protein resides in the secreted. Functionally, blocks contraction of smooth muscle elicited by high potassium-induced depolarization, but does not block caffeine-stimulated contraction. May target voltage-gated calcium channels in smooth muscle. The sequence is that of Cysteine-rich venom protein from Vipera berus (Common European adder).